A 158-amino-acid polypeptide reads, in one-letter code: uncharacterized protein (158 aa).

This is an uncharacterized protein from Ureaplasma parvum serovar 3 (strain ATCC 700970).